A 603-amino-acid chain; its full sequence is Geraniol synthase Tps-5031G8, chloroplastic (603 aa).

Residues 1 to 35 (MCSISQKVVIGLNKAAANNCLQNLDRRGFKTRRVS) constitute a chloroplast transit peptide. 5 residues coordinate (2E)-geranyl diphosphate: Arg-319, Asp-356, Asp-360, Arg-497, and Asp-500. Asp-356 and Asp-360 together coordinate Mg(2+). The DDXXD motif signature appears at 356–360 (DDVYD). Residues Asp-500, Thr-504, and Glu-508 each coordinate Mg(2+).

The protein belongs to the terpene synthase family. Tpsb subfamily. Monomer. The cofactor is Mg(2+). It depends on Mn(2+) as a cofactor.

The protein resides in the plastid. It localises to the chloroplast. It carries out the reaction (2E)-geranyl diphosphate + H2O = (2E)-geraniol + diphosphate. It functions in the pathway secondary metabolite biosynthesis; terpenoid biosynthesis. Monoterpene synthase (mono-TPS) involved in the biosynthesis of monoterpenes natural products. Catalyzes the conversion of (2E)-geranyl diphosphate (GPP) into geraniol. The chain is Geraniol synthase Tps-5031G8, chloroplastic from Perilla frutescens var. hirtella (Perilla citriodora).